Reading from the N-terminus, the 61-residue chain is Lens epithelial cell protein LEP503 (61 aa).

As to expression, preferentially expressed in the lens epithelial cells.

This is Lens epithelial cell protein LEP503 (Lenep) from Rattus norvegicus (Rat).